A 3623-amino-acid polypeptide reads, in one-letter code: Cubilin (3623 aa).

The first 20 residues, 1-20 (MSSQFLWGFVTLLMIAELDG), serve as a signal peptide directing secretion. A propeptide spans 21-32 (KTGKPEQRGQKR) (removed in mature form). The segment at 39–46 (PRMTTEEG) is interaction with AMN. A glycan (N-linked (GlcNAc...) asparagine) is linked at Asn95. Positions 129–165 (ERKVCSSNPCLNGGTCVNLHDSFVCICPSQWKGLFCS) constitute an EGF-like 1 domain. 9 disulfides stabilise this stretch: Cys133/Cys144, Cys138/Cys153, Cys155/Cys164, Cys171/Cys187, Cys181/Cys196, Cys198/Cys207, Cys264/Cys277, Cys271/Cys286, and Cys289/Cys300. Positions 167-208 (DVNECVVYSGTPFGCQSGSTCVNTVGSFRCDCTPDTYGPQCA) constitute an EGF-like 2; calcium-binding domain. Residues 260–301 (DKDECSLQPSPCSEHAQCFNTQGSFYCGACPKGWQGNGYECQ) enclose the EGF-like 3; calcium-binding domain. Residues 302-345 (DINECEINNGGCSQAPLVPCLNTPGSFSCGNCPAGFSGDGRVCT) form the EGF-like 4; calcium-binding domain. 2 EGF-like domains span residues 346-385 (PVDICSIHNGGCHPEATCSSSPVLGSFLPVCTCPPGYTGN) and 395-430 (LSNICSRHPCVNGQCIETVSSYFCKCDSGWSGQNCT). Intrachain disulfides connect Cys350-Cys363, Cys357-Cys376, Cys399-Cys409, Cys404-Cys418, Cys420-Cys429, Cys436-Cys447, Cys441-Cys456, Cys458-Cys467, Cys474-Cys500, Cys527-Cys549, Cys590-Cys616, Cys643-Cys665, and Cys708-Cys734. A glycan (N-linked (GlcNAc...) asparagine) is linked at Asn428. The 37-residue stretch at 432–468 (NINDCSSNPCLNGGTCIDGINGFTCDCTSSWTGYYCQ) folds into the EGF-like 7; calcium-binding domain. 27 CUB domains span residues 474–586 (CGGI…WEAK), 590–702 (CGGI…YLTT), 708–816 (CGGN…YQVA), 817–928 (CGGM…FSSD), 932–1042 (CGEV…YEAI), 1048–1161 (CLYD…WDGS), 1165–1277 (CGGN…FRQR), 1278–1389 (CDNV…WFTH), 1391–1506 (CGGE…WRAV), 1510–1619 (CGGI…FREE), 1620–1734 (CGGR…YSAS), 1738–1850 (CGGS…FKNI), 1852–1963 (GNNN…WFAV), 1978–2091 (CGGF…FHKS), 2092–2213 (CGGY…YEAK), 2217–2334 (CGGT…YSIA), 2336–2448 (CGGT…FKSS), 2452–2565 (CGGD…YTST), 2570–2687 (CGGF…YSFT), 2689–2801 (CGGI…WTTN), 2805–2919 (CGGT…FISR), 2920–3035 (CGRT…YRAI), 3037–3150 (CGGI…FRET), 3157–3274 (CGGY…YTFV), 3278–3393 (CGGT…YQIA), 3395–3507 (CNRE…WTSS), and 3511–3623 (CGGT…MWSS). An N-linked (GlcNAc...) asparagine glycan is attached at Asn491. N-linked (GlcNAc...) asparagine glycans are attached at residues Asn711 and Asn749. The cysteines at positions 761 and 779 are disulfide-linked. Asn781 is a glycosylation site (N-linked (GlcNAc...) asparagine). An intrachain disulfide couples Cys817 to Cys842. Asn857 carries an N-linked (GlcNAc...) asparagine glycan. 2 cysteine pairs are disulfide-bonded: Cys869–Cys891 and Cys932–Cys958. The N-linked (GlcNAc...) asparagine glycan is linked to Asn957. Glu980 is a binding site for Ca(2+). Asn984 carries N-linked (GlcNAc...) asparagine glycosylation. Cys985 and Cys1005 are joined by a disulfide. Ca(2+) contacts are provided by Asp988, Asp1027, and Leu1030. Cys1048 and Cys1074 are joined by a disulfide. Ca(2+) is bound by residues Glu1096, Asp1105, and Asp1146. A disulfide bridge connects residues Cys1165 and Cys1191. An N-linked (GlcNAc...) asparagine glycan is attached at Asn1168. Residues Glu1213, Asp1221, Asp1262, Gly1264, and Gln1265 each coordinate Ca(2+). Cys1218 and Cys1240 are joined by a disulfide. Cys1278 and Cys1306 are disulfide-bonded. 3 N-linked (GlcNAc...) asparagine glycosylation sites follow: Asn1285, Asn1307, and Asn1319. Position 1328 (Glu1328) interacts with Ca(2+). N-linked (GlcNAc...) asparagine glycosylation is present at Asn1332. Cys1333 and Cys1351 are oxidised to a cystine. Residues Asp1336, Asp1373, and Ile1375 each coordinate Ca(2+). 2 disulfides stabilise this stretch: Cys1391/Cys1417 and Cys1444/Cys1466. A glycan (N-linked (GlcNAc...) asparagine) is linked at Asn1500. An intrachain disulfide couples Cys1510 to Cys1536. N-linked (GlcNAc...) asparagine glycosylation is found at Asn1551, Asn1646, and Asn1671. A disulfide bridge links Cys1620 with Cys1647. 3 disulfide bridges follow: Cys1675/Cys1697, Cys1738/Cys1764, and Cys1791/Cys1812. Asn1802 and Asn1819 each carry an N-linked (GlcNAc...) asparagine glycan. 3 cysteine pairs are disulfide-bonded: Cys1905–Cys1927, Cys1978–Cys2006, and Cys2032–Cys2054. N-linked (GlcNAc...) asparagine glycosylation is found at Asn2085 and Asn2117. 2 cysteine pairs are disulfide-bonded: Cys2092/Cys2118 and Cys2217/Cys2247. Residue Asn2274 is glycosylated (N-linked (GlcNAc...) asparagine). Intrachain disulfides connect Cys2275–Cys2297, Cys2336–Cys2363, Cys2390–Cys2411, Cys2452–Cys2478, and Cys2505–Cys2527. Asn2400 carries N-linked (GlcNAc...) asparagine glycosylation. 3 N-linked (GlcNAc...) asparagine glycosylation sites follow: Asn2531, Asn2581, and Asn2610. A disulfide bond links Cys2570 and Cys2599. Disulfide bonds link Cys2628-Cys2649, Cys2689-Cys2715, Cys2742-Cys2764, Cys2805-Cys2831, Cys2860-Cys2883, Cys2920-Cys2946, and Cys2977-Cys2999. N-linked (GlcNAc...) asparagine glycans are attached at residues Asn2813, Asn2875, Asn2945, and Asn2989. Thr3008 bears the Phosphothreonine mark. 2 disulfides stabilise this stretch: Cys3037–Cys3064 and Cys3091–Cys3113. N-linked (GlcNAc...) asparagine glycans are attached at residues Asn3042, Asn3106, Asn3125, and Asn3165. 2 cysteine pairs are disulfide-bonded: Cys3157–Cys3185 and Cys3215–Cys3237. Asn3268, Asn3283, and Asn3290 each carry an N-linked (GlcNAc...) asparagine glycan. 2 disulfides stabilise this stretch: Cys3278/Cys3306 and Cys3332/Cys3354. N-linked (GlcNAc...) asparagine glycans are attached at residues Asn3357, Asn3400, and Asn3430. Cys3395 and Cys3421 form a disulfide bridge. Cystine bridges form between Cys3448/Cys3470, Cys3511/Cys3537, and Cys3564/Cys3586. The N-linked (GlcNAc...) asparagine glycan is linked to Asn3533.

In terms of assembly, interacts with AMN. Component of the cubam complex composed of one CUBN trimer and one AMN chain. The cubam complex can dimerize. Interacts with LRP2 in a dual-receptor complex in a calcium-dependent manner. Found in a complex with PID1/PCLI1, LRP1 and CUBNI. Interacts with LRP1 and PID1/PCLI1. The precursor is cleaved by a trans-Golgi proteinase furin, removing a propeptide. In terms of processing, N-glycosylated. Expressed to intestinal, renal and yalk sac apical membranes. In kidney, expressed in the proximal tubule.

The protein resides in the cell membrane. The protein localises to the endosome membrane. Its subcellular location is the lysosome membrane. Endocytic receptor which plays a role in lipoprotein, vitamin and iron metabolism by facilitating their uptake. Acts together with LRP2 to mediate endocytosis of high-density lipoproteins, GC, hemoglobin, ALB, TF and SCGB1A1. Acts together with AMN to mediate endocytosis of the CBLIF-cobalamin complex. Binds to ALB, MB, Kappa and lambda-light chains, TF, hemoglobin, GC, SCGB1A1, APOA1, high density lipoprotein, and the CBLIF-cobalamin complex. Ligand binding requires calcium. Serves as important transporter in several absorptive epithelia, including intestine, renal proximal tubules and embryonic yolk sac. May play an important role in the development of the peri-implantation embryo through internalization of APOA1 and cholesterol. Binds to LGALS3 at the maternal-fetal interface. The polypeptide is Cubilin (Cubn) (Rattus norvegicus (Rat)).